Reading from the N-terminus, the 617-residue chain is Serine/threonine-protein kinase par-4 (617 aa).

Positions 1–11 are enriched in polar residues; that stretch reads MDAPSTSSGAQ. A disordered region spans residues 1 to 59; sequence MDAPSTSSGAQSKLLMPGDDEADEDHQNRGDPNLQQKQKIQLNVDPDYDDDEDDDCFID. Residues 46-57 are compositionally biased toward acidic residues; the sequence is PDYDDDEDDDCF. The region spanning 183–446 is the Protein kinase domain; that stretch reads YMWGGQIGTG…CLETMIHPWF (264 aa). Residues 189–197 and Lys-212 each bind ATP; that span reads IGTGSYGKV. The active-site Proton acceptor is the Asp-310. Residues 523-617 are disordered; that stretch reads LEAKPGDGPD…CIFRSRTDSA (95 aa). Residues 587–597 show a composition bias toward pro residues; it reads DPPPTAAPGAP.

It belongs to the protein kinase superfamily. CAMK Ser/Thr protein kinase family. LKB1 subfamily. Interacts with strd-1. Mg(2+) is required as a cofactor. Requires Mn(2+) as cofactor. As to expression, expressed in the gonads, oocytes and early embryos (at protein level).

The protein resides in the cytoplasm. Its subcellular location is the cell cortex. The catalysed reaction is L-seryl-[protein] + ATP = O-phospho-L-seryl-[protein] + ADP + H(+). The enzyme catalyses L-threonyl-[protein] + ATP = O-phospho-L-threonyl-[protein] + ADP + H(+). In terms of biological role, required for cytoplasmic partitioning and asymmetric cell division in early embryogenesis. Controls the asymmetric cell division of the Q.p neuroblast lineage. Involved in mediating cell polarization via regulation of anillin family scaffold proteins. Phosphorylates and restricts the asymmetry effectors mex-5 and mex-6 to the anterior cytoplasm of the zygote and maintains these phosphorylations until fertilization. May phosphorylate par-1. Required for strd-1 localization to the cell cortex of early embryos and may be required for strd-1 protein stabilization. May regulate the integrity of the early embryonic cortex in a strd-1-dependent manner. Phosphorylates and regulates aak-2 in response to oxidative stress and during dauer development. May also play a role in motility, behavioral response, regulation of lifespan and dauer formation through this pathway. Required to establish germline stem cell (GSC) quiescence during dauer development. Acts downstream of unc-40 in dendrite outgrowth. May play a role in cell shedding during embryogenesis, probably by phosphorylating pig-1. In Caenorhabditis elegans, this protein is Serine/threonine-protein kinase par-4 (par-4).